Reading from the N-terminus, the 692-residue chain is A-kinase anchor protein 8 (692 aa).

The tract at residues 1-195 is interaction with MCM2; sequence MDQGYGGYGA…FMRGRGQGRF (195 aa). The interaction with DPY30 stretch occupies residues 1-210; it reads MDQGYGGYGA…PGTFMRSDPF (210 aa). Arginine 109 bears the Asymmetric dimethylarginine; alternate mark. Residue arginine 109 is modified to Omega-N-methylarginine; alternate. The segment at 109-201 is interaction with DDX5; it reads RGGSGGGGEG…QGRFQDRSNP (93 aa). The residue at position 112 (serine 112) is a Phosphoserine. Disordered stretches follow at residues 168-203, 231-254, and 269-382; these read GQYS…NPGT, GGRG…SMAP, and STMP…RTRD. The segment covering 172 to 182 has biased composition (basic and acidic residues); it reads ECRDPARERGS. Serine 199 carries the phosphoserine modification. Residues arginine 233 and arginine 277 each carry the omega-N-methylarginine modification. Composition is skewed to basic and acidic residues over residues 281-297 and 314-323; these read RMRD…DRFG and PDTKLARVDS. The Bipartite nuclear localization signal motif lies at 289 to 306; the sequence is KRRGFDRFGPDGTGRKRK. Lysine 317 participates in a covalent cross-link: Glycyl lysine isopeptide (Lys-Gly) (interchain with G-Cter in SUMO2). Serine 323, serine 328, and serine 339 each carry phosphoserine. Acidic residues predominate over residues 324 to 334; it reads EGDFSENDDAA. The segment at 387–450 is involved in chromatin-binding; sequence RIQFACSVCK…NKKIEKRRQE (64 aa). 2 consecutive C2H2 AKAP95-type zinc fingers follow at residues 392–414 and 481–504; these read CSVC…SKFH and CLAC…SVDH. The tract at residues 525–569 is involved in condensin complex recruitment; it reads SVLNNRHIVKMLEKYLKGEDPFTSETVDPEMEGDDNLGGEDKKET. The interval 545–571 is disordered; sequence PFTSETVDPEMEGDDNLGGEDKKETPE. The segment covering 551 to 562 has biased composition (acidic residues); sequence VDPEMEGDDNLG. Residue lysine 567 forms a Glycyl lysine isopeptide (Lys-Gly) (interchain with G-Cter in SUMO2) linkage. Positions 572–589 are RII-binding; it reads EVAADVLAEVITAAVRAV. Residues 576–593 are required for interaction with MYCBP; that stretch reads DVLAEVITAAVRAVDGEG. A disordered region spans residues 592–692; that stretch reads EGAPAPESSG…AESKDAVPTE (101 aa). The segment covering 634 to 646 has biased composition (basic and acidic residues); it reads AHEKGVPKARSEA. Serine 662 carries the phosphoserine modification. The span at 663 to 675 shows a compositional bias: low complexity; that stretch reads AQTRVAPAPAAAD. Basic and acidic residues predominate over residues 683–692; that stretch reads AESKDAVPTE. A Phosphoserine modification is found at serine 685.

This sequence belongs to the AKAP95 family. As to quaternary structure, binds to the PKA RII-alpha regulatory subunit PRKAR2A (phosphorylated at 'Thr-54') during mitosis. Interacts (via C-terminus) with FIGN. Interacts with NCAPD2, CCND1, MCM2, RPS6KA1, PDE4A. Interacts with CCND3, CCNE1, DDX5, CASP3. Interacts with NFKB1; detetcted in the cytoplasm. Interacts with MYCBP; MYCBP is translocated to the nucleus and the interaction prevents the association of the PKA catalytic subunit leading to suppression of PKA activity. Interacts with DPY30; mediating AKAP8 association with at least the MLL4/WBP7 HMT complex. Interacts with HDAC3; increased during mitosis. Interacts with GJA1; in the nucleus and in the nuclear membrane; the nuclear association increases with progress of cell cycle G1, S and G2 phase and decreases in M phase. Post-translationally, phosphorylated on tyrosine residues probably by SRC subfamily protein kinases; multiple phosphorylation is leading to dissociation from nuclear structures implicated in chromatin structural changes. In terms of tissue distribution, highly expressed in heart, liver, skeletal muscle, kidney and pancreas. Expressed in mature dendritic cells.

Its subcellular location is the nucleus. It is found in the nucleus matrix. It localises to the nucleolus. The protein localises to the cytoplasm. In terms of biological role, anchoring protein that mediates the subcellular compartmentation of cAMP-dependent protein kinase (PKA type II). Acts as an anchor for a PKA-signaling complex onto mitotic chromosomes, which is required for maintenance of chromosomes in a condensed form throughout mitosis. Recruits condensin complex subunit NCAPD2 to chromosomes required for chromatin condensation; the function appears to be independent from PKA-anchoring. May help to deliver cyclin D/E to CDK4 to facilitate cell cycle progression. Required for cell cycle G2/M transition and histone deacetylation during mitosis. In mitotic cells recruits HDAC3 to the vicinity of chromatin leading to deacetylation and subsequent phosphorylation at 'Ser-10' of histone H3; in this function may act redundantly with AKAP8L. Involved in nuclear retention of RPS6KA1 upon ERK activation thus inducing cell proliferation. May be involved in regulation of DNA replication by acting as scaffold for MCM2. Enhances HMT activity of the KMT2 family MLL4/WBP7 complex and is involved in transcriptional regulation. In a teratocarcinoma cell line is involved in retinoic acid-mediated induction of developmental genes implicating H3 'Lys-4' methylation. May be involved in recruitment of active CASP3 to the nucleus in apoptotic cells. May act as a carrier protein of GJA1 for its transport to the nucleus. May play a repressive role in the regulation of rDNA transcription. Preferentially binds GC-rich DNA in vitro. In cells, associates with ribosomal RNA (rRNA) chromatin, preferentially with rRNA promoter and transcribed regions. Involved in modulation of Toll-like receptor signaling. Required for the cAMP-dependent suppression of TNF-alpha in early stages of LPS-induced macrophage activation; the function probably implicates targeting of PKA to NFKB1. The sequence is that of A-kinase anchor protein 8 (AKAP8) from Homo sapiens (Human).